A 72-amino-acid polypeptide reads, in one-letter code: Translation initiation factor IF-1 (72 aa).

Residues 1–72 (MAKEEVLEFP…TKGRITYRLK (72 aa)) form the S1-like domain.

Belongs to the IF-1 family. In terms of assembly, component of the 30S ribosomal translation pre-initiation complex which assembles on the 30S ribosome in the order IF-2 and IF-3, IF-1 and N-formylmethionyl-tRNA(fMet); mRNA recruitment can occur at any time during PIC assembly.

Its subcellular location is the cytoplasm. Functionally, one of the essential components for the initiation of protein synthesis. Stabilizes the binding of IF-2 and IF-3 on the 30S subunit to which N-formylmethionyl-tRNA(fMet) subsequently binds. Helps modulate mRNA selection, yielding the 30S pre-initiation complex (PIC). Upon addition of the 50S ribosomal subunit IF-1, IF-2 and IF-3 are released leaving the mature 70S translation initiation complex. This Brucella suis biovar 1 (strain 1330) protein is Translation initiation factor IF-1.